The sequence spans 175 residues: Protein-export protein SecB (175 aa).

Belongs to the SecB family. As to quaternary structure, homotetramer, a dimer of dimers. One homotetramer interacts with 1 SecA dimer.

The protein localises to the cytoplasm. Its function is as follows. One of the proteins required for the normal export of preproteins out of the cell cytoplasm. It is a molecular chaperone that binds to a subset of precursor proteins, maintaining them in a translocation-competent state. It also specifically binds to its receptor SecA. In Anaplasma marginale (strain Florida), this protein is Protein-export protein SecB.